The primary structure comprises 1605 residues: Nuclear pore complex protein Nup153 (1605 aa).

Over residues 1–16 the composition is skewed to gly residues; sequence MAAAGGGGPGGPGTGG. Disordered stretches follow at residues 1 to 44 and 185 to 208; these read MAAA…GIIS and STSQ…SDKD. Polar residues-rich tracts occupy residues 27–44 and 194–203; these read SGRT…GIIS and ISTTSGFSSR. The stretch at 249–250 is repeat 1; it reads FG. A 33 X 2 AA repeats of F-G region spans residues 249–1556; that stretch reads FGSLSPSLGN…NSSGGVFTFN (1308 aa). 3 disordered regions span residues 332–373, 397–476, and 497–522; these read SPLA…PFPP, LTPS…GPVL, and SGSA…SSSP. The segment covering 397–409 has biased composition (polar residues); sequence LTPSAVSNTNSRR. Residues 410 to 420 show a composition bias toward basic and acidic residues; it reads IQPDKHNESRK. Composition is skewed to polar residues over residues 421-432 and 497-517; these read NNLQTTSQSHSF and SGSA…TCRL. The RanBP2-type 1 zinc finger occupies 655–684; sequence AFGLWQCSACFHENMSSDSNCISCSALKPR. The stretch at 656-657 is repeat 2; the sequence is FG. Zn(2+) contacts are provided by Cys661, Cys664, Cys675, and Cys678. The interval 686–711 is disordered; that stretch reads TETSKKLPASPPSSNTKSTVPLSSTP. Residues 697-711 show a composition bias toward polar residues; it reads PSSNTKSTVPLSSTP. RanBP2-type zinc fingers lie at residues 720-749, 790-819, 842-871, and 906-935; these read PAGM…PKPG, PMGS…EKPG, PTGS…AKPG, and SAGS…SKPG. Zn(2+)-binding residues include Cys726, Cys729, Cys740, Cys743, Cys796, Cys799, Cys810, Cys813, Cys848, Cys851, Cys862, and Cys865. 31 consecutive repeat copies span residues 943–944, 959–960, 988–989, 1007–1008, 1021–1022, 1044–1045, 1100–1101, 1116–1117, 1134–1135, 1148–1149, 1167–1168, 1188–1189, 1227–1228, 1243–1244, 1259–1260, 1275–1276, 1291–1292, 1307–1308, 1339–1340, 1356–1357, 1371–1372, 1382–1383, 1414–1415, 1430–1431, 1448–1449, 1470–1471, 1482–1483, 1502–1503, 1512–1513, 1521–1522, and 1535–1536. Over residues 1499–1518 the composition is skewed to polar residues; sequence VPAFGSSSAQPPVFGQQATQ. Residues 1499–1529 are disordered; the sequence is VPAFGSSSAQPPVFGQQATQPSFGSPAAPSA. The span at 1519–1529 shows a compositional bias: low complexity; that stretch reads PSFGSPAAPSA. The tract at residues 1556-1605 is disordered; the sequence is NANSGSTTQPPPPGYMFNAAAPGFNMGTNGRTTPASTISTRKIKTARRRK. The span at 1581-1595 shows a compositional bias: polar residues; it reads MGTNGRTTPASTIST. Residues 1596–1605 show a composition bias toward basic residues; that stretch reads RKIKTARRRK.

The protein belongs to the NUP153 family. As to quaternary structure, interacts (via C-terminal domain) with the nuclear receptor kpnb1; the interaction occurs in a RanGTP-dependent manner. Associates with the Importin alpha/Importin beta receptor. Zn(2+) serves as cofactor. Egg (at protein level).

The protein localises to the nucleus membrane. Its subcellular location is the nucleus. It is found in the nuclear pore complex. Component of the nuclear pore complex (NPC), a complex required for the trafficking across the nuclear envelope. Functions as a scaffolding element in the nuclear phase of the NPC essential for normal nucleocytoplasmic transport of proteins and mRNAs. May be involved in the retention of unspliced mRNAs in the nucleus. Probably mediates tpr anchoring to the nuclear membrane at NPC. Possible DNA-binding subunit of the nuclear pore complex (NPC). In Xenopus laevis (African clawed frog), this protein is Nuclear pore complex protein Nup153 (nup153).